A 282-amino-acid chain; its full sequence is AB hydrolase superfamily protein FGSG_00045 (282 aa).

Over residues 1–10 (MAPISSTRPS) the composition is skewed to polar residues. Positions 1–22 (MAPISSTRPSHSIAADNPNPTT) are disordered. Positions 22 to 270 (TQVNFNTNMT…FADMVKRWII (249 aa)) constitute an AB hydrolase-1 domain.

The protein belongs to the AB hydrolase superfamily.

It participates in mycotoxin biosynthesis. Its function is as follows. AB hydrolase superfamily protein; part of the gene cluster that mediates the biosynthesis of gramillins A and B, bicyclic lipopeptides that induce cell death in maize leaves but not in wheat leaves. The nonribosomal peptide synthetase GRA1 incorporates respectively a glutamic adic (Glu), a leucine (Leu), a serine (Ser), a hydroxyglutamine (HOGln), a 2-amino decanoic acid, and 2 cysteins (CysB and CysA). The biosynthesis of 2-amino decanoic acid incorporated in gramillins could be initiated by a fatty acid synthase composed of the alpha and beta subunits FGSG_00036 and FGSG_11656. The cytochrome P450 monooxygenase FGSG_15680 could hydroxylate the fatty acid chain. Subsequent oxidation to the ketone by the oxidoreductase FGSG_00048 and transamination by aminotransferase FGSG_00049 could form 2-amino-decanoic acid. On the other hand, FGSG_15680 could also be responsible for the HO-modified glutamine at the gamma-position. Whether hydroxylation occurs on the fully assembled product or on the Gln residue prior to assembly into the gramillins requires further proof. The thioredoxin FGSG_00043 could also be required for the disulfide-bond formation between CysA and CysB. The specific involvement of the remaining proteins from the cluster is more difficult to discern, but could have broader regulatory (FGSG_00040 and FGSG_11657) or enzymatic functions (FGSG_00044 and FGSG_00045). The final C-domain of GRA1 does not possess the expected sequence of a termination CT domain, often implicated in macrocyclization and release of a cyclopeptidein fungal NRPs; and the thioesterase FGSG_00047 may act in concert with the terminal C-domain of GRA1 to catalyze the formation of the macrocyclic anhydride and release of the products. This Gibberella zeae (strain ATCC MYA-4620 / CBS 123657 / FGSC 9075 / NRRL 31084 / PH-1) (Wheat head blight fungus) protein is AB hydrolase superfamily protein FGSG_00045.